The sequence spans 457 residues: Non-structural protein V (457 aa).

2 disordered regions span residues 26 to 104 and 193 to 403; these read KTYG…DPDD and FVPK…MPIK. Polar residues-rich tracts occupy residues 28-37 and 77-96; these read YGRSSIQQPS and DLSSVTSSDGTIGQRVSNTR. Residues 240–252 are compositionally biased toward acidic residues; that stretch reads SDDEDENQLEYED. Ser-257 is subject to Phosphoserine; by host. Residues 296–317 are compositionally biased toward basic and acidic residues; that stretch reads FPEKEETPDVRRKDSLMQDSCK. Position 350 is a phosphoserine; by host (Ser-350). Residues His-406, Cys-425, Cys-429, Cys-441, Cys-443, Cys-446, Cys-450, and Cys-453 each coordinate Zn(2+).

This sequence belongs to the paramyxoviruses V protein family. As to quaternary structure, interacts with host IFIH1/MDA5, DHX58/LGP2, STAT1 and STAT2.

The protein resides in the host cytoplasm. Functionally, plays an essential role in the inhibition of host immune response. Prevents the establishment of cellular antiviral state by blocking interferon-alpha/beta (IFN-alpha/beta) production and signaling pathway. Interacts with host IFIH1/MDA5 and DHX58/LGP2 to inhibit the transduction pathway involved in the activation of IFN-beta promoter, thus protecting the virus against cell antiviral state. Blocks the type I interferon signaling pathway by interacting with host STAT1 and STAT2 and thereby inhibiting their phosphorylation and subsequent nuclear translocation. Efficiently blocks the type II interferon signaling pathway. This Hendra virus (isolate Horse/Autralia/Hendra/1994) protein is Non-structural protein V (P/V/C).